Reading from the N-terminus, the 345-residue chain is Heat-inducible transcription repressor HrcA (345 aa).

Belongs to the HrcA family.

In terms of biological role, negative regulator of class I heat shock genes (grpE-dnaK-dnaJ and groELS operons). Prevents heat-shock induction of these operons. This is Heat-inducible transcription repressor HrcA from Dehalococcoides mccartyi (strain ATCC BAA-2100 / JCM 16839 / KCTC 5957 / BAV1).